A 450-amino-acid polypeptide reads, in one-letter code: Grayanic acid biosynthesis cluster O-methyltransferase (450 aa).

Aspartate 254 lines the S-adenosyl-L-methionine pocket. Histidine 301 (proton acceptor) is an active-site residue.

This sequence belongs to the class I-like SAM-binding methyltransferase superfamily. Cation-independent O-methyltransferase family. COMT subfamily.

The protein operates within secondary metabolite biosynthesis. Non-reducing polyketide synthase; part of the gene cluster that mediates the biosynthesis of orcinol depsidone grayanic acid (GRA), the only major secondary metabolite known in C.grayi. The first step consists in the ring and depside synthesis by PKS16 leading to 4-O-demethylsphaerophorin, involving different orcinol-like rings, one with acetyl CoA and the other with octanoyl CoA as the starter. Further depsidone formation by the GRA cluster-specific cytochrome P450 leads to 4-O-demethylgrayanic acid. Finally, the cluster specific O-methyltransferase probably converts the 4-O-demethylgrayanic acid into grayanic acid. The chain is Grayanic acid biosynthesis cluster O-methyltransferase from Cladonia grayi (Gray's cup lichen).